Here is a 222-residue protein sequence, read N- to C-terminus: Dihydrophenazinedicarboxylate synthase (222 aa).

S18 serves as a coordination point for substrate. Residues 73–76 and 88–89 contribute to the FMN site; these read RIVV and ST. H90 contacts substrate. FMN contacts are provided by residues 94-95 and Q117; that span reads QK. Substrate contacts are provided by R139 and S147. Residues 152–153 and R205 each bind FMN; that span reads QS.

This sequence belongs to the pyridoxamine 5'-phosphate oxidase family. The cofactor is FMN.

The catalysed reaction is (1R,6R)-1,4,5,5a,6,9-hexahydrophenazine-1,6-dicarboxylate + O2 = (1R,10aS)-1,4,10,10a-tetrahydrophenazine-1,6-dicarboxylate + H2O2. The enzyme catalyses (1R,10aS)-1,4,10,10a-tetrahydrophenazine-1,6-dicarboxylate + O2 = (5aS)-5,5a-dihydrophenazine-1,6-dicarboxylate + H2O2. It catalyses the reaction (1R,10aS)-1,4,10,10a-tetrahydrophenazine-1-carboxylate + O2 = (10aS)-10,10a-dihydrophenazine-1-carboxylate + H2O2. It carries out the reaction (1R)-1,4,5,10-tetrahydrophenazine-1-carboxylate + O2 = (10aS)-10,10a-dihydrophenazine-1-carboxylate + H2O2. Its pathway is antibiotic biosynthesis; phenazine biosynthesis. Involved in the biosynthesis of the antibiotic phenazine, a nitrogen-containing heterocyclic molecule having important roles in virulence, competition and biological control. Catalyzes several oxidations in the terminal steps of core phenazine biosynthesis. It oxidizes both hexahydrophenazine-1,6-dicarboxylic acid (HHPDC) and tetrahydrophenazine-1-carboxylic acid (THPCA) and thereby contributes to the generation of both phenazine-1,6-dicarboxylic acid (PDC) and phenazine-1-carboxylic acid (PCA). The protein is Dihydrophenazinedicarboxylate synthase of Pseudomonas chlororaphis (Pseudomonas aureofaciens).